We begin with the raw amino-acid sequence, 447 residues long: Rab GDP dissociation inhibitor alpha (447 aa).

S427 carries the phosphoserine modification.

The protein belongs to the Rab GDI family. Interacts with RHOH. Interacts with the non-phosphorylated forms of RAB1A, RAB3A, RAB5A, RAB5B, RAB5C, RAB8A, RAB8B, RAB10, RAB12, RAB35, and RAB43. As to expression, high expression in brain, lower in other tissues.

Its subcellular location is the cytoplasm. The protein resides in the golgi apparatus. It localises to the trans-Golgi network. Functionally, regulates the GDP/GTP exchange reaction of most Rab proteins by inhibiting the dissociation of GDP from them, and the subsequent binding of GTP to them. Promotes the dissociation of GDP-bound Rab proteins from the membrane and inhibits their activation. Promotes the dissociation of RAB1A, RAB3A, RAB5A and RAB10 from membranes. This is Rab GDP dissociation inhibitor alpha (Gdi1) from Rattus norvegicus (Rat).